The primary structure comprises 379 residues: Mannitol-1-phosphate 5-dehydrogenase (379 aa).

An NAD(+)-binding site is contributed by 3–14; the sequence is ALHFGAGNIGRG.

Belongs to the mannitol dehydrogenase family.

The catalysed reaction is D-mannitol 1-phosphate + NAD(+) = beta-D-fructose 6-phosphate + NADH + H(+). The polypeptide is Mannitol-1-phosphate 5-dehydrogenase (Bacillus licheniformis (strain ATCC 14580 / DSM 13 / JCM 2505 / CCUG 7422 / NBRC 12200 / NCIMB 9375 / NCTC 10341 / NRRL NRS-1264 / Gibson 46)).